Here is a 338-residue protein sequence, read N- to C-terminus: Nicotinate-nucleotide--dimethylbenzimidazole phosphoribosyltransferase (338 aa).

Residue E306 is the Proton acceptor of the active site.

Belongs to the CobT family.

It catalyses the reaction 5,6-dimethylbenzimidazole + nicotinate beta-D-ribonucleotide = alpha-ribazole 5'-phosphate + nicotinate + H(+). It participates in nucleoside biosynthesis; alpha-ribazole biosynthesis; alpha-ribazole from 5,6-dimethylbenzimidazole: step 1/2. In terms of biological role, catalyzes the synthesis of alpha-ribazole-5'-phosphate from nicotinate mononucleotide (NAMN) and 5,6-dimethylbenzimidazole (DMB). The protein is Nicotinate-nucleotide--dimethylbenzimidazole phosphoribosyltransferase of Cereibacter sphaeroides (strain ATCC 17025 / ATH 2.4.3) (Rhodobacter sphaeroides).